A 709-amino-acid polypeptide reads, in one-letter code: Polyribonucleotide nucleotidyltransferase (709 aa).

Mg(2+)-binding residues include Asp-489 and Asp-495. Positions 556-615 (PKIDMIKIDVDKIKVVIGKGGETIDKIIAETGVKIDIDEEGNVSIFSSDQAAIDRTKDII) constitute a KH domain. In terms of domain architecture, S1 motif spans 625 to 693 (GEVYHAKVVR…DKGRVDASMK (69 aa)).

This sequence belongs to the polyribonucleotide nucleotidyltransferase family. Requires Mg(2+) as cofactor.

It is found in the cytoplasm. The catalysed reaction is RNA(n+1) + phosphate = RNA(n) + a ribonucleoside 5'-diphosphate. Involved in mRNA degradation. Catalyzes the phosphorolysis of single-stranded polyribonucleotides processively in the 3'- to 5'-direction. The protein is Polyribonucleotide nucleotidyltransferase of Streptococcus agalactiae serotype V (strain ATCC BAA-611 / 2603 V/R).